The following is a 185-amino-acid chain: MISVTELRNGTKVQMDGGLWECLDYSHLKMGRGGAKVVTKFRNMESGSIVDRTFNSTEKLQDIYVEGKKMQYLYPDGDDYVFMDMETFDQVHLGKNIVSDAAKFMKENTEVEVAMYGDKALSISLPNQVILKITQTDPGVRGDTVSGGTKPATLETGAVVQVPLFVEQGTDVKVDTRTGQYLSRA.

It belongs to the elongation factor P family.

It is found in the cytoplasm. The protein operates within protein biosynthesis; polypeptide chain elongation. In terms of biological role, involved in peptide bond synthesis. Stimulates efficient translation and peptide-bond synthesis on native or reconstituted 70S ribosomes in vitro. Probably functions indirectly by altering the affinity of the ribosome for aminoacyl-tRNA, thus increasing their reactivity as acceptors for peptidyl transferase. The polypeptide is Elongation factor P (Deinococcus radiodurans (strain ATCC 13939 / DSM 20539 / JCM 16871 / CCUG 27074 / LMG 4051 / NBRC 15346 / NCIMB 9279 / VKM B-1422 / R1)).